A 793-amino-acid chain; its full sequence is MADAWEEIRRLAADFQRAQFAESTQRLSERNCIEIVNKLISQKQLEVVHTLDGKEYITPAQISKEMRDELHVRGGRVNIVDLQQVINVDLTHIESRVSDIIKSEKHVQMVLGQLIDENYLDQLSEEVNDKLQESGQVTVSELCKAYDLPGDFLTQALTQRLGRIINGHLDLDNRGVIFTEAFVARHKARIRGLFSAITRPTPVNSLVSKYGFQEQLLYSVLEDLVSTGRLRGTVVGGRQDKAVFVPDIYSRTQSTWVDSFFRQNGYLEFDALSRLGIPDAVNYIKKRYKNTQLLFLKATCVGQGLVDQVEASVEEAISSGTWVDISPLLPSSLSVEDAAMLLQQVMRPFGKLASAIVFSDTVVVSEKFITDCTGLFSERMHQKAEKEMKNNPVHLITEEDLKQISILESVNTSKKDKKDERRKKATEGSGSVRGGGGGNAREYKIKKTKKKGRKDEDSDDESQSSHGGKKKPDITFMFQDEIEDCLRKHIQDAPEEFISELAEYLIKPLNKMYLEVVRSVFMSSTSASGTGRKRTIKDLQEEVSNLYNNIRLFEKGMKYFADDTQTALTKHLLKTVCTDITNLMFNFLASDFLMAVEEPAAITSDIRKKILSKLTEETKVALTKLHNSLNEKSIEDFLSCLDSATEACDIMVKKGDKKRERQILFQHRQALCEQLKVTEDPALILHLTAVLLFQLSTHSMLHAPGRCVPQIIAFLHSKIPEDQHTLLVKYQGLVVKQLVSQNKKTGQGEDPSSDELDKEQHDVTNATRKELQELSLSIKDLVLKSRKSSVTEE.

Ala2 bears the N-acetylalanine mark. The mediates interaction with DDRGK1 stretch occupies residues 2-200 (ADAWEEIRRL…RGLFSAITRP (199 aa)). Positions 2–212 (ADAWEEIRRL…VNSLVSKYGF (211 aa)) are required for E3 UFM1-protein ligase activity. Residues 121-250 (DQLSEEVNDK…KAVFVPDIYS (130 aa)) form an involved in CDK5RAP3-binding region. The mediates interaction with TRIP4 stretch occupies residues 200–400 (PTPVNSLVSK…NPVHLITEED (201 aa)). The disordered stretch occupies residues 410–473 (VNTSKKDKKD…SSHGGKKKPD (64 aa)). Omega-N-methylarginine is present on Arg433. Residues Ser458 and Ser462 each carry the phosphoserine modification. The interval 490–683 (IQDAPEEFIS…QLKVTEDPAL (194 aa)) is mediates interaction with CDK5RAP3. The residue at position 535 (Thr535) is a Phosphothreonine. Residues 742–765 (NKKTGQGEDPSSDELDKEQHDVTN) are disordered. Residues Ser752 and Ser753 each carry the phosphoserine modification.

It belongs to the UFL1 family. Catalytic component of the UFM1 ribosome E3 ligase (UREL) complex, composed of UFL1, DDRGK1 and CDK5RAP3. Interacts with E2-like enzyme UFC1. Interacts with RELA. Interacts with NBN; promoting recruitment to double-strand breaks following DNA damage. Interacts (when phosphorylated) with YWHAG/14-3-3-gamma; sequestering UFL1 and preventing its association with PDCD1/PD-1 substrate. Post-translationally, ubiquitinated, leading to its degradation by the proteasome. Interaction with CDK5RAP3 protects both proteins against ubiquitination and degradation via the proteasome. Phosphorylated at Ser-462 by ATM, enhancing protein ligase activity and promoting ATM activation in a positive feedback loop. Phosphorylation at Thr-535 by AMPK promotes its interaction with YWHAG/14-3-3-gamma, thereby preventing UFL1 association with PDCD1/PD-1 substrate. As to expression, ubiquitously expressed with higher expression in pancreatic islets and other secretory tissues. In the embryonic brain at 17 dpc, detected in Sox2-positive neural stem cells and in Slc1a3/GLAST-positive radial glia. In perinatal brain, highly expressed in Slc1a3-positive Bergmann glia of the cerebellum. Continues to be expressed in Bergmann glia of adult brain at 16 weeks. Expressed in adult heart. Highly expressed in the intestinal exocrine cells.

It is found in the endoplasmic reticulum membrane. The protein resides in the cytoplasm. Its subcellular location is the cytosol. It localises to the nucleus. The protein localises to the chromosome. In terms of biological role, E3 protein ligase that mediates ufmylation, the covalent attachment of the ubiquitin-like modifier UFM1 to lysine residues on target proteins, and which plays a key role in various processes, such as ribosome recycling, response to DNA damage, interferon response or reticulophagy (also called ER-phagy). Catalyzes ufmylation of many protein, such as CD274/PD-L1, CDK5RAP3, CYB5R3, DDRGK1, EIF6, histone H4, MRE11, P4HB, PDCD1/PD-1, TRIP4, RPN1, RPS20/uS10, RPL10/uL16, RPL26/uL24, SYVN1/HRD1 and TP53/p53. As part of the UREL complex, plays a key role in ribosome recycling by catalyzing mono-ufmylation of RPL26/uL24 subunit of the 60S ribosome. Ufmylation of RPL26/uL24 occurs on free 60S ribosomes following ribosome dissociation: it weakens the junction between post-termination 60S subunits and SEC61 translocons, promoting release and recycling of the large ribosomal subunit from the endoplasmic reticulum membrane. Ufmylation of RPL26/uL24 and subsequent 60S ribosome recycling either take place after normal termination of translation or after ribosome stalling during cotranslational translocation at the endoplasmic reticulum. Involved in reticulophagy in response to endoplasmic reticulum stress by mediating ufmylation of proteins such as CYB5R3 and RPN1, thereby promoting lysosomal degradation of ufmylated proteins. Ufmylation in response to endoplasmic reticulum stress is essential for processes such as hematopoiesis, blood vessel morphogenesis or inflammatory response. Mediates ufmylation of DDRGK1 and CDK5RAP3; the role of these modifications is however unclear: as both DDRGK1 and CDK5RAP3 act as substrate adapters for ufmylation, it is uncertain whether ufmylation of these proteins is a collateral effect or is required for ufmylation. Acts as a negative regulator of T-cell activation by mediating ufmylation and stabilization of PDCD1/PD-1. Also involved in the response to DNA damage: recruited to double-strand break sites following DNA damage and mediates monoufmylation of histone H4 and ufmylation of MRE11. Mediates ufmylation of TP53/p53, promoting its stability. Catalyzes ufmylation of TRIP4, thereby playing a role in nuclear receptor-mediated transcription. Required for hematopoietic stem cell function and hematopoiesis. This chain is E3 UFM1-protein ligase 1, found in Mus musculus (Mouse).